A 292-amino-acid polypeptide reads, in one-letter code: Ribonuclease HIII (292 aa).

Positions 76–292 (TNLIGTDEVG…TQKAIKIAQL (217 aa)) constitute an RNase H type-2 domain. A divalent metal cation contacts are provided by aspartate 82, glutamate 83, and aspartate 186.

Belongs to the RNase HII family. RnhC subfamily. Mn(2+) is required as a cofactor. Requires Mg(2+) as cofactor.

It localises to the cytoplasm. The enzyme catalyses Endonucleolytic cleavage to 5'-phosphomonoester.. Endonuclease that specifically degrades the RNA of RNA-DNA hybrids. The sequence is that of Ribonuclease HIII from Lactococcus lactis subsp. lactis (strain IL1403) (Streptococcus lactis).